A 227-amino-acid chain; its full sequence is Cytochrome c oxidase subunit 2 (227 aa).

Residues 1–14 (MAYPFQLGLQDASS) lie on the Mitochondrial intermembrane side of the membrane. A helical membrane pass occupies residues 15–45 (PIMEELMNFHDHTLMIVFLISSLVLYLMALM). The Mitochondrial matrix portion of the chain corresponds to 46 to 59 (LSTKLIHTSTMDAQ). The chain crosses the membrane as a helical span at residues 60–87 (EVETIWTILPAIILIMIALPSLRILYMM). At 88–227 (DEINNPILTV…LFENWSMSMT (140 aa)) the chain is on the mitochondrial intermembrane side. Residues histidine 161, cysteine 196, glutamate 198, cysteine 200, histidine 204, and methionine 207 each coordinate Cu cation. A Mg(2+)-binding site is contributed by glutamate 198.

This sequence belongs to the cytochrome c oxidase subunit 2 family. Component of the cytochrome c oxidase (complex IV, CIV), a multisubunit enzyme composed of 14 subunits. The complex is composed of a catalytic core of 3 subunits MT-CO1, MT-CO2 and MT-CO3, encoded in the mitochondrial DNA, and 11 supernumerary subunits COX4I, COX5A, COX5B, COX6A, COX6B, COX6C, COX7A, COX7B, COX7C, COX8 and NDUFA4, which are encoded in the nuclear genome. The complex exists as a monomer or a dimer and forms supercomplexes (SCs) in the inner mitochondrial membrane with NADH-ubiquinone oxidoreductase (complex I, CI) and ubiquinol-cytochrome c oxidoreductase (cytochrome b-c1 complex, complex III, CIII), resulting in different assemblies (supercomplex SCI(1)III(2)IV(1) and megacomplex MCI(2)III(2)IV(2)). Found in a complex with TMEM177, COA6, COX18, COX20, SCO1 and SCO2. Interacts with TMEM177 in a COX20-dependent manner. Interacts with COX20. Interacts with COX16. It depends on Cu cation as a cofactor.

It localises to the mitochondrion inner membrane. It catalyses the reaction 4 Fe(II)-[cytochrome c] + O2 + 8 H(+)(in) = 4 Fe(III)-[cytochrome c] + 2 H2O + 4 H(+)(out). Component of the cytochrome c oxidase, the last enzyme in the mitochondrial electron transport chain which drives oxidative phosphorylation. The respiratory chain contains 3 multisubunit complexes succinate dehydrogenase (complex II, CII), ubiquinol-cytochrome c oxidoreductase (cytochrome b-c1 complex, complex III, CIII) and cytochrome c oxidase (complex IV, CIV), that cooperate to transfer electrons derived from NADH and succinate to molecular oxygen, creating an electrochemical gradient over the inner membrane that drives transmembrane transport and the ATP synthase. Cytochrome c oxidase is the component of the respiratory chain that catalyzes the reduction of oxygen to water. Electrons originating from reduced cytochrome c in the intermembrane space (IMS) are transferred via the dinuclear copper A center (CU(A)) of subunit 2 and heme A of subunit 1 to the active site in subunit 1, a binuclear center (BNC) formed by heme A3 and copper B (CU(B)). The BNC reduces molecular oxygen to 2 water molecules using 4 electrons from cytochrome c in the IMS and 4 protons from the mitochondrial matrix. In Gerbillus gerbillus (Lesser Egyptian gerbil), this protein is Cytochrome c oxidase subunit 2 (MT-CO2).